Here is a 1174-residue protein sequence, read N- to C-terminus: Probable pyruvate-flavodoxin oxidoreductase (1174 aa).

4Fe-4S ferredoxin-type domains lie at 680 to 709 (EIPI…AKVV) and 736 to 765 (YVLQ…NPEI). [4Fe-4S] cluster-binding residues include cysteine 689, cysteine 692, cysteine 695, cysteine 699, cysteine 745, cysteine 748, cysteine 751, cysteine 755, cysteine 819, cysteine 822, cysteine 847, and cysteine 1071.

Belongs to the pyruvate:ferredoxin/flavodoxin oxidoreductase family. [4Fe-4S] cluster is required as a cofactor.

The enzyme catalyses oxidized [flavodoxin] + pyruvate + CoA + 2 H(+) = reduced [flavodoxin] + acetyl-CoA + CO2. Its function is as follows. Oxidoreductase required for the transfer of electrons from pyruvate to flavodoxin. The chain is Probable pyruvate-flavodoxin oxidoreductase (ydbK) from Escherichia coli (strain K12).